Consider the following 493-residue polypeptide: Xaa-Pro dipeptidase (493 aa).

Ala2 carries the post-translational modification N-acetylalanine. Phosphoserine is present on Ser167. His255 contacts a dipeptide. 3 residues coordinate Mn(2+): Asp276, Asp287, and His370. Asp287 contacts a dipeptide. The a dipeptide site is built by His377 and Arg398. Glu412 and Glu452 together coordinate Mn(2+).

It belongs to the peptidase M24B family. Eukaryotic-type prolidase subfamily. Homodimer. It depends on Mn(2+) as a cofactor.

It catalyses the reaction Xaa-L-Pro dipeptide + H2O = an L-alpha-amino acid + L-proline. Functionally, dipeptidase that catalyzes the hydrolysis of dipeptides with a prolyl (Xaa-Pro) or hydroxyprolyl residue in the C-terminal position. The preferred dipeptide substrate is Gly-Pro, but other Xaa-Pro dipeptides, such as Ala-Pro, Met-Pro, Phe-Pro, Val-Pro and Leu-Pro, can be cleaved. Plays an important role in collagen metabolism because the high level of iminoacids in collagen. This chain is Xaa-Pro dipeptidase (Pepd), found in Mus musculus (Mouse).